The chain runs to 364 residues: Succinate--CoA ligase [ADP-forming] subunit beta (364 aa).

The ATP-grasp domain maps to 9-229 (KNIFKKYGIP…EFEEYKNKEK (221 aa)). ATP-binding positions include Lys43, 50–52 (GRG), Glu89, Leu92, and Glu97. Residues Asn189 and Asp203 each coordinate Mg(2+). Residues Asn246 and 303–305 (GIT) contribute to the substrate site.

The protein belongs to the succinate/malate CoA ligase beta subunit family. In terms of assembly, heterotetramer of two alpha and two beta subunits. It depends on Mg(2+) as a cofactor.

It catalyses the reaction succinate + ATP + CoA = succinyl-CoA + ADP + phosphate. The catalysed reaction is GTP + succinate + CoA = succinyl-CoA + GDP + phosphate. It participates in carbohydrate metabolism; tricarboxylic acid cycle; succinate from succinyl-CoA (ligase route): step 1/1. Succinyl-CoA synthetase functions in the citric acid cycle (TCA), coupling the hydrolysis of succinyl-CoA to the synthesis of either ATP or GTP and thus represents the only step of substrate-level phosphorylation in the TCA. The beta subunit provides nucleotide specificity of the enzyme and binds the substrate succinate, while the binding sites for coenzyme A and phosphate are found in the alpha subunit. In Methanocaldococcus jannaschii (strain ATCC 43067 / DSM 2661 / JAL-1 / JCM 10045 / NBRC 100440) (Methanococcus jannaschii), this protein is Succinate--CoA ligase [ADP-forming] subunit beta.